Here is a 282-residue protein sequence, read N- to C-terminus: Undecaprenyl-diphosphatase (282 aa).

7 helical membrane-spanning segments follow: residues 45–65 (AFME…VVFI), 86–106 (WQLW…GIPL), 114–134 (FHNF…FILI), 151–171 (LPYK…FPGT), 196–216 (FFLG…KFIL), 224–244 (GQLT…MYVI), and 256–276 (FTVF…YWVF).

The protein belongs to the UppP family.

The protein resides in the cell membrane. It catalyses the reaction di-trans,octa-cis-undecaprenyl diphosphate + H2O = di-trans,octa-cis-undecaprenyl phosphate + phosphate + H(+). Its function is as follows. Catalyzes the dephosphorylation of undecaprenyl diphosphate (UPP). Confers resistance to bacitracin. This Streptococcus gordonii (strain Challis / ATCC 35105 / BCRC 15272 / CH1 / DL1 / V288) protein is Undecaprenyl-diphosphatase.